Reading from the N-terminus, the 293-residue chain is MPTQRIISAVIGIALAFSLLILGGWYFSAAIALVIYLGLREYFQMVRAKGIAPAAKTTMVLSLMLLLSATVTPHLTDAFFPLTGALICFYLLFQPKMATIADISTSLLGLFYGGYLPSYWVRLRLGDGAVNPMGLHLPLNGFWPESWAHPENFPTGLLVTILAFACIWAADIGAYIMGKWLGRTRLSDISPKKTVEGSLWGVGGSLLVGVLGAWYLQWPYWEITGALLGLLIGIVSLLGDLTESMMKRDAGVKDSGQLIPGHGGILDRTDSYVFTAPLVYYFVVLLLPVLNNL.

Transmembrane regions (helical) follow at residues 6–26 (IISA…GGWY), 51–71 (IAPA…SATV), 73–93 (PHLT…YLLF), 97–117 (MATI…GYLP), 157–177 (LLVT…AYIM), 195–215 (VEGS…GAWY), 218–238 (WPYW…VSLL), and 273–293 (VFTA…LNNL).

The protein belongs to the CDS family.

It localises to the cell membrane. It catalyses the reaction a 1,2-diacyl-sn-glycero-3-phosphate + CTP + H(+) = a CDP-1,2-diacyl-sn-glycerol + diphosphate. It functions in the pathway phospholipid metabolism; CDP-diacylglycerol biosynthesis; CDP-diacylglycerol from sn-glycerol 3-phosphate: step 3/3. The sequence is that of Phosphatidate cytidylyltransferase (cdsA) from Synechocystis sp. (strain ATCC 27184 / PCC 6803 / Kazusa).